We begin with the raw amino-acid sequence, 233 residues long: Lipoprotein-releasing system ATP-binding protein LolD (233 aa).

The region spanning 9-233 (LAINAVSKVF…GILSQSETHR (225 aa)) is the ABC transporter domain. ATP is bound at residue 45–52 (GSSGSGKS).

Belongs to the ABC transporter superfamily. Lipoprotein translocase (TC 3.A.1.125) family. The complex is composed of two ATP-binding proteins (LolD) and two transmembrane proteins (LolC and LolE).

It is found in the cell inner membrane. In terms of biological role, part of the ABC transporter complex LolCDE involved in the translocation of mature outer membrane-directed lipoproteins, from the inner membrane to the periplasmic chaperone, LolA. Responsible for the formation of the LolA-lipoprotein complex in an ATP-dependent manner. This is Lipoprotein-releasing system ATP-binding protein LolD from Shewanella denitrificans (strain OS217 / ATCC BAA-1090 / DSM 15013).